The chain runs to 684 residues: Probable pectin methyltransferase QUA2 (684 aa).

The interval 1-35 is disordered; the sequence is MSMPLQRGISGVRVSDSSDDLRDSQMKDKTERARS. Residues 1 to 86 are Cytoplasmic-facing; sequence MSMPLQRGIS…RHRLMLLFLK (86 aa). Basic and acidic residues predominate over residues 19–35; sequence DDLRDSQMKDKTERARS. Residues 87-107 traverse the membrane as a helical; Signal-anchor for type II membrane protein segment; sequence ISLVLIVVIALAGSFWWTISI. Topologically, residues 108–684 are lumenal; the sequence is STSSRGHVYH…QKPFTKRQSI (577 aa). Asn-161 and Asn-476 each carry an N-linked (GlcNAc...) asparagine glycan.

The protein belongs to the methyltransferase superfamily. In terms of tissue distribution, ubiquitous.

It localises to the golgi apparatus membrane. Its pathway is glycan metabolism; pectin biosynthesis. May be involved in the synthesis of homogalacturonan. Required for normal cell adhesion and plant development. The sequence is that of Probable pectin methyltransferase QUA2 (QUA2) from Arabidopsis thaliana (Mouse-ear cress).